A 233-amino-acid chain; its full sequence is ATP synthase subunit a 2 (233 aa).

Helical transmembrane passes span 15-35 (FVVI…LVIG), 78-98 (YLAF…LTVV), 107-127 (SLST…IYGI), 169-189 (IMSG…FVPV), and 194-214 (LGLV…LVYI).

The protein belongs to the ATPase A chain family. In terms of assembly, F-type ATPases have 2 components, CF(1) - the catalytic core - and CF(0) - the membrane proton channel. CF(1) has five subunits: alpha(3), beta(3), gamma(1), delta(1), epsilon(1). CF(0) has four main subunits: a, b, b' and c.

Its subcellular location is the cellular thylakoid membrane. In terms of biological role, key component of the proton channel; it plays a direct role in the translocation of protons across the membrane. In Picosynechococcus sp. (strain ATCC 27264 / PCC 7002 / PR-6) (Agmenellum quadruplicatum), this protein is ATP synthase subunit a 2.